Here is a 407-residue protein sequence, read N- to C-terminus: QYSESQESGHNRNAPDKELTTEEFQLIFHQSQTVDIEYDFINITTEMIETERKVSFTIDGKEYHLSLTPAASQSVLPYGTKIKSAIWWTDNDTHIHEEDYSDERWDSRAIYENLEIMATILVRTENGTSYYDGVFGEGIAMKVVRSLPGRLMNIYGANYHFVYDSNGSVYDVVLNGQDEPAVPADMAVNNFYPKLLVLVDYSLFKIFNENFEETVKYLTIFWNAVNLRFRPVQHPKVNIIITGIVIAKNEAAFQHVYRARYSKNSKLVHTGRVIDNGRYFFGTNFDPYYDNYDASFTMASMDDPTGKGGATVIGGICSSSNNIAYIRDVGSYSGVKVATHELGHLLNGQHDSDTTCSEKINDNIYTIMAKQGSTKASKFVWSSCTLTAFANFSKTTSAACLKDTYRK.

N-linked (GlcNAc...) asparagine glycans are attached at residues asparagine 42, asparagine 91, asparagine 126, and asparagine 166. Positions 191-405 (FYPKLLVLVD…TSAACLKDTY (215 aa)) constitute a Peptidase M12B domain. Intrachain disulfides connect cysteine 317–cysteine 400 and cysteine 356–cysteine 384. Residue histidine 340 participates in Zn(2+) binding. Glutamate 341 is a catalytic residue. Histidine 344 and histidine 350 together coordinate Zn(2+). The N-linked (GlcNAc...) asparagine glycan is linked to asparagine 391.

The protein in the C-terminal section; belongs to the venom metalloproteinase (M12B) family. As to quaternary structure, monomer. The cofactor is Zn(2+). Expressed by the venom gland.

The protein localises to the secreted. With respect to regulation, the gelatinase activity is inhibited by EDTA. The recombinant protein has gelatinase activity. In vivo, injection of this recombinant into fifth instar L.oleracea (host) larvae results in partial insect mortality associated with the molt to sixth instar, with surviving insects showing retarded development and growth. The sequence is that of Venom metalloproteinase 3 from Eulophus pennicornis (Parasitoid wasp).